Here is a 550-residue protein sequence, read N- to C-terminus: Amino acid transporter AVT1C (550 aa).

Positions 1-11 (MNHVPSDQSFY) are enriched in polar residues. Disordered regions lie at residues 1-44 (MNHV…ENQA) and 128-148 (QGLL…EKSS). The segment covering 20 to 34 (RKDYVEEDGGSHSDS) has biased composition (basic and acidic residues). 11 consecutive transmembrane segments (helical) span residues 165–185 (AVLN…PYAA), 190–210 (WLGL…GILL), 237–257 (IFVS…YIIL), 283–303 (LFAL…DLSV), 307–327 (ISAG…WIGL), 342–362 (LSTL…HAVF), 377–397 (AVLL…AVMG), 422–442 (IAVW…ISPV), 462–484 (IGIR…FFGL), 488–510 (LIGS…LSIV), and 521–541 (LCVL…YSAL).

This sequence belongs to the amino acid/polyamine transporter 2 family. Amino acid/auxin permease (AAAP) (TC 2.A.18.5) subfamily.

The protein resides in the membrane. The sequence is that of Amino acid transporter AVT1C from Arabidopsis thaliana (Mouse-ear cress).